Consider the following 106-residue polypeptide: Large ribosomal subunit protein uL24 (106 aa).

This sequence belongs to the universal ribosomal protein uL24 family. Part of the 50S ribosomal subunit.

One of two assembly initiator proteins, it binds directly to the 5'-end of the 23S rRNA, where it nucleates assembly of the 50S subunit. Its function is as follows. One of the proteins that surrounds the polypeptide exit tunnel on the outside of the subunit. In Rhodospirillum rubrum (strain ATCC 11170 / ATH 1.1.1 / DSM 467 / LMG 4362 / NCIMB 8255 / S1), this protein is Large ribosomal subunit protein uL24.